Consider the following 491-residue polypeptide: Allene oxide synthase 3 (491 aa).

Residues lysine 104, histidine 135, and lysine 139 each contribute to the heme b site. The (13S)-hydroperoxy-(9Z,11E)-octadecadienoate site is built by asparagine 296 and lysine 302. Residue asparagine 296 participates in (13S)-hydroperoxy-(9Z,11E,15Z)-octadecatrienoate binding. Heme b contacts are provided by lysine 442 and cysteine 444.

Belongs to the cytochrome P450 family. Requires heme b as cofactor. Expressed in roots. Not detected in aerial tissues, including cotyledons, leaves, stems and flower buds.

It carries out the reaction (13S)-hydroperoxy-(9Z,11E,15Z)-octadecatrienoate = (9Z,13S,15Z)-12,13-epoxyoctadeca-9,11,15-trienoate + H2O. The catalysed reaction is (13S)-hydroperoxy-(9Z,11E)-octadecadienoate = (9Z,13S)-12,13-epoxyoctadeca-9,11-dienoate + H2O. The enzyme catalyses (9Z,13S,15Z)-12,13-epoxyoctadeca-9,11,15-trienoate = (9S,13S,15Z)-12-oxophyto-10,15-dienoate. Functionally, cytochrome P450 metabolizing both 13- and 9-hydroperoxides of linoleic and linolenic acids, but with a marked preference for 9-hydroperoxy fatty acids. Catalyzes not only the synthesis of allene oxide, but also its hydrolysis and cyclization. The first step is the synthesis of (12Z)-9,10-epoxyoctadeca-10,12-dienoic acid (9,10-EOD) and the final products are (9R)-alpha-ketol and the racemic cis-10-oxo-11-phytoenoic acid. The cyclase activity possesses regiospecificity and (9Z)-12,13-epoxyoctadeca-9,11-dienoic acid (12,13-EOD) is significantly less efficient as a substrate for cyclopentenone production than 9,10-EOD. Has no hydroperoxide lyase activity. May play a defensive role against soil-borne pests that affect roots or juvenile tissues as they emerge from the germinating seed. The protein is Allene oxide synthase 3 of Solanum lycopersicum (Tomato).